The primary structure comprises 224 residues: RNA-free ribonuclease P (224 aa).

The protein belongs to the HARP family.

The enzyme catalyses Endonucleolytic cleavage of RNA, removing 5'-extranucleotides from tRNA precursor.. RNA-free RNase P that catalyzes the removal of the 5'-leader sequence from pre-tRNA to produce the mature 5'-terminus. In Haloarcula marismortui (strain ATCC 43049 / DSM 3752 / JCM 8966 / VKM B-1809) (Halobacterium marismortui), this protein is RNA-free ribonuclease P.